The chain runs to 190 residues: MFQVPDSEGGRAGSRAMKPPGGESSNLFGSPEEATPSSRPNRMASNIFGPTEEPQNIPKRTNPPGGKGSGIFDESTPVQTRQHLNPPGGKTSDIFGSPVTATSRLAHPNKPKDHVFLCEGEEPKSDLKAARSIPAGAEPGEKGSARKAGPAKEQEPMPTVDSHEPRLGPRPRSHNKVLNPPGGKSSISFY.

Met-1 carries the post-translational modification N-acetylmethionine. Positions 1–190 are disordered; it reads MFQVPDSEGG…PGGKSSISFY (190 aa). Ser-30 bears the Phosphoserine mark. Thr-35 is modified (phosphothreonine). The span at 35 to 44 shows a compositional bias: polar residues; sequence TPSSRPNRMA. Phosphoserine is present on residues Ser-45, Ser-69, and Ser-97. A compositionally biased stretch (basic and acidic residues) spans 110–129; that stretch reads KPKDHVFLCEGEEPKSDLKA. Phosphoserine is present on residues Ser-132 and Ser-144. A compositionally biased stretch (basic and acidic residues) spans 139 to 167; it reads PGEKGSARKAGPAKEQEPMPTVDSHEPRL.

Belongs to the JUPITER family. In terms of assembly, monomer. Dimer. Interacts with TPCN1. In terms of tissue distribution, expressed in liver, kidney, prostate, testis and uterus.

It is found in the cytoplasm. The protein localises to the nucleus. Nicotinic acid adenine dinucleotide phosphate (NAADP) binding protein required for NAADP-evoked intracellular calcium release. Confers NAADP-sensitivity to the two pore channels (TPCs) complex. Enables NAADP to activate Ca(2+) release from the endoplasmic reticulum through ryanodine receptors. In terms of biological role, (Microbial infection) Involved in the endolysosomal trafficking of human coronavirus SARS-CoV-2. The polypeptide is Jupiter microtubule associated homolog 2 (Homo sapiens (Human)).